The following is a 255-amino-acid chain: Hydroxyacylglutathione hydrolase (255 aa).

The Zn(2+) site is built by His56, His58, Asp60, His61, His114, Asp133, and His171.

The protein belongs to the metallo-beta-lactamase superfamily. Glyoxalase II family. Monomer. The cofactor is Zn(2+).

It catalyses the reaction an S-(2-hydroxyacyl)glutathione + H2O = a 2-hydroxy carboxylate + glutathione + H(+). It participates in secondary metabolite metabolism; methylglyoxal degradation; (R)-lactate from methylglyoxal: step 2/2. Thiolesterase that catalyzes the hydrolysis of S-D-lactoyl-glutathione to form glutathione and D-lactic acid. In Cereibacter sphaeroides (strain ATCC 17023 / DSM 158 / JCM 6121 / CCUG 31486 / LMG 2827 / NBRC 12203 / NCIMB 8253 / ATH 2.4.1.) (Rhodobacter sphaeroides), this protein is Hydroxyacylglutathione hydrolase.